A 50-amino-acid polypeptide reads, in one-letter code: U37-theraphotoxin-Cg1b (50 aa).

The N-terminal stretch at 1 to 19 is a signal peptide; that stretch reads MRVLLIIAGLALLSVVCYT.

Belongs to the neurotoxin 10 (Hwtx-1) family. 67 (Jztx-67) subfamily. As to expression, expressed by the venom gland.

The protein resides in the secreted. The chain is U37-theraphotoxin-Cg1b from Chilobrachys guangxiensis (Chinese earth tiger tarantula).